The chain runs to 595 residues: Transketolase-like protein 1 (595 aa).

Thiamine diphosphate is bound at residue 93–95; it reads GWP. Residues aspartate 125, asparagine 155, and isoleucine 157 each contribute to the Mg(2+) site. A thiamine diphosphate-binding site is contributed by asparagine 155. Thiamine diphosphate contacts are provided by lysine 217, glutamate 339, and phenylalanine 365. Glutamate 339 (proton donor) is an active-site residue. The substrate site is built by histidine 389 and aspartate 397. Histidine 401 is a thiamine diphosphate binding site.

Belongs to the transketolase family. Homodimer. Mg(2+) is required as a cofactor. The cofactor is Ca(2+). Mn(2+) serves as cofactor. It depends on Co(2+) as a cofactor. Requires thiamine diphosphate as cofactor. As to expression, not expressed in the embryonic neocortex.

The protein resides in the cytoplasm. The enzyme catalyses D-sedoheptulose 7-phosphate + D-glyceraldehyde 3-phosphate = aldehydo-D-ribose 5-phosphate + D-xylulose 5-phosphate. Functionally, catalyzes the transfer of a two-carbon ketol group from a ketose donor to an aldose acceptor, via a covalent intermediate with the cofactor thiamine pyrophosphate. The protein is Transketolase-like protein 1 of Mus musculus (Mouse).